The chain runs to 520 residues: GMP synthase [glutamine-hydrolyzing] (520 aa).

The 198-residue stretch at 3-200 (AIAIIDFGSQ…FLDIANCKRD (198 aa)) folds into the Glutamine amidotransferase type-1 domain. Catalysis depends on C84, which acts as the Nucleophile. Active-site residues include H175 and E177. In terms of domain architecture, GMPS ATP-PPase spans 201 to 386 (WTMKSFIEEQ…IGLSDEIIFQ (186 aa)). 228 to 234 (SGGVDSS) contributes to the ATP binding site.

Homodimer.

The enzyme catalyses XMP + L-glutamine + ATP + H2O = GMP + L-glutamate + AMP + diphosphate + 2 H(+). It functions in the pathway purine metabolism; GMP biosynthesis; GMP from XMP (L-Gln route): step 1/1. Its function is as follows. Catalyzes the synthesis of GMP from XMP. This is GMP synthase [glutamine-hydrolyzing] from Wolbachia pipientis wMel.